A 600-amino-acid polypeptide reads, in one-letter code: Chaperonin 60 subunit beta 1, chloroplastic (600 aa).

A compositionally biased stretch (polar residues) spans 1 to 12; the sequence is MASTFTATSSIG. The tract at residues 1-23 is disordered; it reads MASTFTATSSIGSMVAPNGHKSD. A chloroplast-targeting transit peptide spans 1 to 54; it reads MASTFTATSSIGSMVAPNGHKSDKKLISKLSSSSFGRRQSVCPRPRRSSSAIVC. Phosphoserine is present on residues serine 101 and serine 478.

This sequence belongs to the chaperonin (HSP60) family. In terms of assembly, part of the Cpn60 complex composed of 7 alpha and 7 beta subunits. Can also form a complex composed of 14 beta subunits only. Both complexes show ATPase activity. The Cpn60 complex interacts with the Cpn10 complex. Interacts with RAB during heat stress. In terms of tissue distribution, expressed in leaves, stems, petioles and flowers.

The protein resides in the plastid. The protein localises to the chloroplast stroma. Binds RuBisCO small and large subunits and is implicated in the assembly of the enzyme oligomer. Involved in protein assisted folding. Required for proper plastid division. This chain is Chaperonin 60 subunit beta 1, chloroplastic (CPN60B1), found in Arabidopsis thaliana (Mouse-ear cress).